We begin with the raw amino-acid sequence, 159 residues long: Nucleoside diphosphate kinase (159 aa).

6 residues coordinate ATP: K13, F61, R89, T95, R106, and N116. The active-site Pros-phosphohistidine intermediate is H119.

The protein belongs to the NDK family. Requires Mg(2+) as cofactor.

The protein localises to the cytoplasm. The enzyme catalyses a 2'-deoxyribonucleoside 5'-diphosphate + ATP = a 2'-deoxyribonucleoside 5'-triphosphate + ADP. It carries out the reaction a ribonucleoside 5'-diphosphate + ATP = a ribonucleoside 5'-triphosphate + ADP. Major role in the synthesis of nucleoside triphosphates other than ATP. The ATP gamma phosphate is transferred to the NDP beta phosphate via a ping-pong mechanism, using a phosphorylated active-site intermediate. In Halorubrum lacusprofundi (strain ATCC 49239 / DSM 5036 / JCM 8891 / ACAM 34), this protein is Nucleoside diphosphate kinase.